The following is an 84-amino-acid chain: UPF0291 protein SMU_447 (84 aa).

The tract at residues 57 to 84 (EGNDITPAKLKEIQRQKGIHGRKPEDNS) is disordered.

It belongs to the UPF0291 family.

It is found in the cytoplasm. The protein is UPF0291 protein SMU_447 of Streptococcus mutans serotype c (strain ATCC 700610 / UA159).